The chain runs to 246 residues: Ribonuclease 3 (246 aa).

The RNase III domain maps to 18–147 (FQELQKKIGI…FIGALYLDQG (130 aa)). Glu60 serves as a coordination point for Mg(2+). Residue Asp64 is part of the active site. 2 residues coordinate Mg(2+): Asp133 and Glu136. Glu136 is a catalytic residue. In terms of domain architecture, DRBM spans 173-242 (DFKSQLQELV…AQMALETLRA (70 aa)).

The protein belongs to the ribonuclease III family. As to quaternary structure, homodimer. The cofactor is Mg(2+).

The protein resides in the cytoplasm. It carries out the reaction Endonucleolytic cleavage to 5'-phosphomonoester.. Functionally, digests double-stranded RNA. Involved in the processing of primary rRNA transcript to yield the immediate precursors to the large and small rRNAs (23S and 16S). Processes some mRNAs, and tRNAs when they are encoded in the rRNA operon. Processes pre-crRNA and tracrRNA of type II CRISPR loci if present in the organism. The polypeptide is Ribonuclease 3 (Geobacillus thermodenitrificans (strain NG80-2)).